The following is a 370-amino-acid chain: uncharacterized protein (370 aa).

At M1 the chain carries N-acetylmethionine.

Belongs to the ornithine cyclodeaminase/mu-crystallin family.

This is an uncharacterized protein from Saccharomyces cerevisiae (strain ATCC 204508 / S288c) (Baker's yeast).